The following is a 2214-amino-acid chain: Genome polyprotein (2214 aa).

Disordered stretches follow at residues 1-21 (MGAQVSSQKVGAHENTNVATG) and 600-619 (KPQKQLTAQSTPSTSGVNSQ). Glycine 2 is lipidated: N-myristoyl glycine; by host. Residues 2–1525 (GAQVSSQKVG…NLNRAMTILQ (1524 aa)) lie on the Cytoplasmic side of the membrane. Amphipathic alpha-helix regions lie at residues 580–601 (QGIEETIDTVISNALQLSQPKP) and 581–601 (GIEETIDTVISNALQLSQPKP). The segment covering 606 to 619 (TAQSTPSTSGVNSQ) has biased composition (polar residues). Active-site for protease 2A activity residues include histidine 906 and aspartate 924. Zn(2+)-binding residues include cysteine 941 and cysteine 943. Cysteine 995 serves as the catalytic For protease 2A activity. Residues cysteine 1001 and histidine 1003 each contribute to the Zn(2+) site. The tract at residues 1133–1205 (GDSWLKKFTE…HQSCPSQEQQ (73 aa)) is membrane-binding. The interval 1133–1271 (GDSWLKKFTE…SPGTGKSIAT (139 aa)) is oligomerization. The segment at 1154-1158 (SNKIS) is RNA-binding. Positions 1237-1393 (ENTINNYIQF…SEHSIKGKLN (157 aa)) constitute an SF3 helicase domain. ATP is bound at residue 1261–1268 (GSPGTGKS). Zn(2+) is bound by residues cysteine 1401, cysteine 1404, cysteine 1413, and cysteine 1418. The C4-type zinc-finger motif lies at 1401 to 1418 (CKDCPQPANFKKCCPLVC). The interval 1445-1452 (ERNRRANI) is RNA-binding. Residues 1456–1461 (MEALFQ) are oligomerization. An intramembrane segment occupies 1526–1541 (AVTTFAAVAAVVYVMY). Topologically, residues 1542-2214 (KLFAGHQGAY…TLYRRWLDSF (673 aa)) are cytoplasmic. Tyrosine 1551 carries the post-translational modification O-(5'-phospho-RNA)-tyrosine. Positions 1571–1749 (GPGFDYAVAM…FAAALKRSYF (179 aa)) constitute a Peptidase C3 domain. Active-site for protease 3C activity residues include histidine 1610, glutamate 1641, and cysteine 1717. Positions 1980–2095 (EKLFAFDYTG…SYPHEVDASL (116 aa)) constitute a RdRp catalytic domain. 2 residues coordinate Mg(2+): aspartate 1986 and aspartate 2081.

This sequence belongs to the picornaviruses polyprotein family. Interacts with capsid protein VP1 and capsid protein VP3 to form heterotrimeric protomers. As to quaternary structure, interacts with capsid protein VP0, and capsid protein VP3 to form heterotrimeric protomers. Five protomers subsequently associate to form pentamers which serve as building blocks for the capsid. Interacts with capsid protein VP2, capsid protein VP3 and capsid protein VP4 following cleavage of capsid protein VP0. In terms of assembly, interacts with capsid protein VP1 and capsid protein VP3 in the mature capsid. Interacts with capsid protein VP0 and capsid protein VP1 to form heterotrimeric protomers. Five protomers subsequently associate to form pentamers which serve as building blocks for the capsid. Interacts with capsid protein VP4 in the mature capsid. Interacts with protein 2C; this interaction may be important for virion morphogenesis. As to quaternary structure, interacts with capsid protein VP1 and capsid protein VP3. In terms of assembly, homodimer. Homohexamer; forms a hexameric ring structure with 6-fold symmetry characteristic of AAA+ ATPases. Interacts (via N-terminus) with host RTN3 (via reticulon domain); this interaction is important for viral replication. Interacts with capsid protein VP3; this interaction may be important for virion morphogenesis. As to quaternary structure, interacts with protein 3CD. In terms of assembly, homodimer. Interacts with host GBF1. Interacts (via GOLD domain) with host ACBD3 (via GOLD domain); this interaction allows the formation of a viral protein 3A/ACBD3 heterotetramer with a 2:2 stoichiometry, which will stimulate the recruitment of host PI4KB in order to synthesize PI4P at the viral RNA replication sites. Interacts with RNA-directed RNA polymerase. As to quaternary structure, interacts with protein 3AB and with RNA-directed RNA polymerase. In terms of assembly, interacts with Viral protein genome-linked and with protein 3CD. The cofactor is Mg(2+). In terms of processing, specific enzymatic cleavages in vivo by the viral proteases yield processing intermediates and the mature proteins. Post-translationally, myristoylation is required for the formation of pentamers during virus assembly. Further assembly of 12 pentamers and a molecule of genomic RNA generates the provirion. During virion maturation, immature virions are rendered infectious following cleavage of VP0 into VP4 and VP2. This maturation seems to be an autocatalytic event triggered by the presence of RNA in the capsid and it is followed by a conformational change infectious virion. In terms of processing, myristoylation is required during RNA encapsidation and formation of the mature virus particle. Post-translationally, VPg is uridylylated by the polymerase into VPg-pUpU. This acts as a nucleotide-peptide primer for the genomic RNA replication.

The protein resides in the virion. It is found in the host cytoplasm. Its subcellular location is the host cytoplasmic vesicle membrane. The protein localises to the host nucleus. The enzyme catalyses a ribonucleoside 5'-triphosphate + H2O = a ribonucleoside 5'-diphosphate + phosphate + H(+). It catalyses the reaction Selective cleavage of Tyr-|-Gly bond in the picornavirus polyprotein.. The catalysed reaction is RNA(n) + a ribonucleoside 5'-triphosphate = RNA(n+1) + diphosphate. It carries out the reaction Selective cleavage of Gln-|-Gly bond in the poliovirus polyprotein. In other picornavirus reactions Glu may be substituted for Gln, and Ser or Thr for Gly.. Its activity is regulated as follows. Replication or transcription is subject to high level of random mutations by the nucleotide analog ribavirin. Forms an icosahedral capsid of pseudo T=3 symmetry with capsid proteins VP2 and VP3. The capsid is 300 Angstroms in diameter, composed of 60 copies of each capsid protein and enclosing the viral positive strand RNA genome. Capsid protein VP1 mainly forms the vertices of the capsid. Capsid protein VP1 interacts with host cell receptor to provide virion attachment to target host cells. This attachment induces virion internalization. Tyrosine kinases are probably involved in the entry process. After binding to its receptor, the capsid undergoes conformational changes. Capsid protein VP1 N-terminus (that contains an amphipathic alpha-helix) and capsid protein VP4 are externalized. Together, they shape a pore in the host membrane through which viral genome is translocated to host cell cytoplasm. In terms of biological role, forms an icosahedral capsid of pseudo T=3 symmetry with capsid proteins VP2 and VP3. The capsid is 300 Angstroms in diameter, composed of 60 copies of each capsid protein and enclosing the viral positive strand RNA genome. Its function is as follows. Lies on the inner surface of the capsid shell. After binding to the host receptor, the capsid undergoes conformational changes. Capsid protein VP4 is released, Capsid protein VP1 N-terminus is externalized, and together, they shape a pore in the host membrane through which the viral genome is translocated into the host cell cytoplasm. Functionally, component of immature procapsids, which is cleaved into capsid proteins VP4 and VP2 after maturation. Allows the capsid to remain inactive before the maturation step. Cysteine protease that cleaves viral polyprotein and specific host proteins. It is responsible for the autocatalytic cleavage between the P1 and P2 regions, which is the first cleavage occurring in the polyprotein. Also cleaves the host translation initiation factor EIF4G1, in order to shut down the capped cellular mRNA translation. Inhibits the host nucleus-cytoplasm protein and RNA trafficking by cleaving host members of the nuclear pores. Counteracts stress granule formation probably by antagonizing its assembly or promoting its dissassembly. Cleaves and inhibits host IFIH1/MDA5, thereby inhibiting the type-I IFN production and the establishment of the antiviral state. Cleaves and inhibits host MAVS, thereby inhibiting the type-I IFN production and the establishment of the antiviral state. In terms of biological role, plays an essential role in the virus replication cycle by acting as a viroporin. Creates a pore in the host endoplasmic reticulum and as a consequence releases Ca2+ in the cytoplasm of infected cell. In turn, high levels of cytoplasmic calcium may trigger membrane trafficking and transport of viral ER-associated proteins to viroplasms, sites of viral genome replication. Its function is as follows. Induces and associates with structural rearrangements of intracellular membranes. Displays RNA-binding, nucleotide binding and NTPase activities. May play a role in virion morphogenesis and viral RNA encapsidation by interacting with the capsid protein VP3. Functionally, localizes the viral replication complex to the surface of membranous vesicles. Together with protein 3CD binds the Cis-Active RNA Element (CRE) which is involved in RNA synthesis initiation. Acts as a cofactor to stimulate the activity of 3D polymerase, maybe through a nucleid acid chaperone activity. Localizes the viral replication complex to the surface of membranous vesicles. It inhibits host cell endoplasmic reticulum-to-Golgi apparatus transport and causes the disassembly of the Golgi complex, possibly through GBF1 interaction. This would result in depletion of MHC, trail receptors and IFN receptors at the host cell surface. Plays an essential role in viral RNA replication by recruiting ACBD3 and PI4KB at the viral replication sites, thereby allowing the formation of the rearranged membranous structures where viral replication takes place. In terms of biological role, acts as a primer for viral RNA replication and remains covalently bound to viral genomic RNA. VPg is uridylylated prior to priming replication into VPg-pUpU. The oriI viral genomic sequence may act as a template for this. The VPg-pUpU is then used as primer on the genomic RNA poly(A) by the RNA-dependent RNA polymerase to replicate the viral genome. During genome replication, the VPg-RNA linkage is removed by the host TDP2, thereby accelerating replication. During the late stage of the replication cycle, host TDP2 is excluded from sites of viral RNA synthesis and encapsidation, allowing for the generation of progeny virions. Its function is as follows. Involved in the viral replication complex and viral polypeptide maturation. It exhibits protease activity with a specificity and catalytic efficiency that is different from protease 3C. Protein 3CD lacks polymerase activity. Protein 3CD binds to the 5'UTR of the viral genome. Functionally, replicates the viral genomic RNA on the surface of intracellular membranes. May form linear arrays of subunits that propagate along a strong head-to-tail interaction called interface-I. Covalently attaches UMP to a tyrosine of VPg, which is used to prime RNA synthesis. The positive stranded RNA genome is first replicated at virus induced membranous vesicles, creating a dsRNA genomic replication form. This dsRNA is then used as template to synthesize positive stranded RNA genomes. ss(+)RNA genomes are either translated, replicated or encapsidated. Major viral protease that mediates proteolytic processing of the polyprotein. Cleaves host EIF5B, contributing to host translation shutoff. Also cleaves host PABPC1, contributing to host translation shutoff. Cleaves host NLRP1, triggers host N-glycine-mediated degradation of the autoinhibitory NLRP1 N-terminal fragment. This Coxsackievirus A24 (strain EH24/70) protein is Genome polyprotein.